Here is a 347-residue protein sequence, read N- to C-terminus: MKIIEEIPQKNIIKLMPENLDDLWVLYNIIEEGDKIFAVTERRVQDKGDVIRADRGAKRKMFLGIEVKNVEFDENTKRVRILGTIIHGPDDVPLGSHHTIEIKPFDELSIEKNWKKWQIERIKEAIESSKRPKVLVVVMDDEEADIFEVRDYSIKEICSIKSHTSKKLDYKINEELKKEYYHEIAKVLSEYDVDNILVAGPGFAKNSFYNFISSQYPELKNKIVVESISTTSRAGLNEVIKRGIINRIYAESRVAKETQLIEKLLEEIAKKGLAVYGIDEVKKALEYSAIDTLLVSDSLVRNHEIEKIIDTTEEMGGKVVIVSSEHDAGKQLKALGGIAGLLRFPIE.

This sequence belongs to the eukaryotic release factor 1 family. Pelota subfamily. Monomer. A divalent metal cation is required as a cofactor.

Its subcellular location is the cytoplasm. Its function is as follows. May function in recognizing stalled ribosomes, interact with stem-loop structures in stalled mRNA molecules, and effect endonucleolytic cleavage of the mRNA. May play a role in the release non-functional ribosomes and degradation of damaged mRNAs. Has endoribonuclease activity. This Methanocaldococcus jannaschii (strain ATCC 43067 / DSM 2661 / JAL-1 / JCM 10045 / NBRC 100440) (Methanococcus jannaschii) protein is Protein pelota homolog.